A 375-amino-acid polypeptide reads, in one-letter code: POU domain, class 3, transcription factor 1 (375 aa).

Disordered stretches follow at residues M1–Q29, M56–I139, and M151–D200. Composition is skewed to polar residues over residues V107 to W117, P130 to I139, and M151 to H160. Residues S162 to P171 are compositionally biased toward basic and acidic residues. Residues E194–D268 form the POU-specific domain. Residues K286–T345 constitute a DNA-binding region (homeobox).

This sequence belongs to the POU transcription factor family. Class-3 subfamily.

It localises to the nucleus. Its function is as follows. Acts as a transcription factor. May play a role in neuronal differentiation. This Xenopus tropicalis (Western clawed frog) protein is POU domain, class 3, transcription factor 1.